Consider the following 149-residue polypeptide: Large ribosomal subunit protein bL9 (149 aa).

This sequence belongs to the bacterial ribosomal protein bL9 family.

Its function is as follows. Binds to the 23S rRNA. This chain is Large ribosomal subunit protein bL9, found in Aquifex aeolicus (strain VF5).